The primary structure comprises 974 residues: MAAEAAGGKYRSTVSKSKDPSGLLISVIRTLSTSDDVEDRENEKGRLEEAYEKCDRDLDELIVQHYTELTTAIRTYQSITERITNSRNKIKQVKENLLSCKMLLHCKRDELRKLWIEGIEHKHVLNLLDEIENIKQVPQKLEQCMASKHYLSATDMLVSAVESLEGPLLQVEGLSDLRLELHSKKMNLHLVLIDELHRHLYIKSTSRVVQRNKEKGKISSLVKDASVPLIDVTNLPTPRKFLDTSHYSTAGSSSVREINLQDIKEDLELDPEENSTLFMGILIKGLAKLKKIPETVKAIIERLEQELKQIVKRSTTQVADSGYQRGENVTVENQPRLLLELLELLFDKFNAVAAAHSVVLGYLQDTVVTPLTQQEDIKLYDMADVWVKIQDVLQMLLTEYLDMKNTRTASEPSAQLSYASTGREFAAFFAKKKPQRPKNSLFKFESSSHAISMSAYLREQRRELYSRSGELQGGPDDNLIEGGGTKFVCKPGARNITVIFHPLLRFIQEIEHALGLGPAKQCPLREFLTVYIKNIFLNQVLAEINKEIEGVTKTSDPLKILANADTMKVLGVQRPLLQSTIIVEKTVQDLLNLMHDLSAYSDQFLNMVCVKLQEYKDTCTAAYRGIVQSEEKLVISASWAKDDDISRLLKSLPNWMNMAQPKQLRPKREEEEDFIRAAFGKESEVLIGNLGDKLIPPQDILRDVSDLKALANMHESLEWLASRTKSAFSNLSTSQMLSPAQDSHTNTDLPPVSEQIMQTLSELAKSFQDMADRCLLVLHLEVRVHCFHYLIPLAKEGNYAIVANVESMDYDPLVVKLNKDISAIEEAMSASLQQHKFQYIFEGLGHLISCILINGAQYFRRISESGIKKMCRNIFVLQQNLTNITMSREADLDFARQYYEMLYNTADELLNLVVDQGVKYTELEYIHALTLLHRSQTGVGELTTQNTRLQRLKEIICEQAAIKQATKDKKITTV.

Ala-2 bears the N-acetylalanine mark. Residue Lys-9 is modified to N6-acetyllysine. Phosphoserine is present on residues Ser-32 and Ser-226. A coiled-coil region spans residues 32-114 (STSDDVEDRE…HCKRDELRKL (83 aa)). Phosphothreonine occurs at positions 233 and 237. Ser-468 is subject to Phosphoserine.

This sequence belongs to the SEC8 family. As to quaternary structure, the exocyst complex is composed of EXOC1, EXOC2, EXOC3, EXOC4, EXOC5, EXOC6, EXOC7 and EXOC8. Interacts with BIRC6/bruce. Interacts with MYRIP. Interacts with SH3BP1; required for the localization of both SH3BP1 and the exocyst to the leading edge of migrating cells. Interacts with SLC6A9.

The protein resides in the midbody. It localises to the midbody ring. It is found in the cell projection. The protein localises to the cytoplasm. Its subcellular location is the cytoskeleton. The protein resides in the microtubule organizing center. It localises to the centrosome. In terms of biological role, component of the exocyst complex involved in the docking of exocytic vesicles with fusion sites on the plasma membrane. The polypeptide is Exocyst complex component 4 (EXOC4) (Homo sapiens (Human)).